The chain runs to 246 residues: ATP synthase subunit a, chloroplastic (246 aa).

4 consecutive transmembrane segments (helical) span residues 35 to 55, 94 to 114, 133 to 153, and 202 to 222; these read GQVF…ALVG, VPYI…GALI, INVT…AGLS, and VFAL…GLFA.

It belongs to the ATPase A chain family. In terms of assembly, F-type ATPases have 2 components, CF(1) - the catalytic core - and CF(0) - the membrane proton channel. CF(1) has five subunits: alpha(3), beta(3), gamma(1), delta(1), epsilon(1). CF(0) has four main subunits: a, b, b' and c.

The protein resides in the plastid. The protein localises to the chloroplast thylakoid membrane. In terms of biological role, key component of the proton channel; it plays a direct role in the translocation of protons across the membrane. This chain is ATP synthase subunit a, chloroplastic, found in Rhodomonas salina (Cryptomonas salina).